A 204-amino-acid polypeptide reads, in one-letter code: Large ribosomal subunit protein eL15B (204 aa).

The interval 165–185 is disordered; that stretch reads TATGKKSRGINKGHKFNNTKA. A compositionally biased stretch (basic residues) spans 169-185; the sequence is KKSRGINKGHKFNNTKA.

This sequence belongs to the eukaryotic ribosomal protein eL15 family. In terms of assembly, component of the large ribosomal subunit (LSU). Mature yeast ribosomes consist of a small (40S) and a large (60S) subunit. The 40S small subunit contains 1 molecule of ribosomal RNA (18S rRNA) and 33 different proteins (encoded by 57 genes). The large 60S subunit contains 3 rRNA molecules (25S, 5.8S and 5S rRNA) and 46 different proteins (encoded by 81 genes).

Its subcellular location is the cytoplasm. Component of the ribosome, a large ribonucleoprotein complex responsible for the synthesis of proteins in the cell. The small ribosomal subunit (SSU) binds messenger RNAs (mRNAs) and translates the encoded message by selecting cognate aminoacyl-transfer RNA (tRNA) molecules. The large subunit (LSU) contains the ribosomal catalytic site termed the peptidyl transferase center (PTC), which catalyzes the formation of peptide bonds, thereby polymerizing the amino acids delivered by tRNAs into a polypeptide chain. The nascent polypeptides leave the ribosome through a tunnel in the LSU and interact with protein factors that function in enzymatic processing, targeting, and the membrane insertion of nascent chains at the exit of the ribosomal tunnel. This chain is Large ribosomal subunit protein eL15B, found in Saccharomyces cerevisiae (strain ATCC 204508 / S288c) (Baker's yeast).